Here is a 43-residue protein sequence, read N- to C-terminus: Probable intron-encoded DNA endonuclease 2 (43 aa).

Belongs to the LAGLIDADG endonuclease family.

The protein localises to the mitochondrion. Functionally, mitochondrial DNA endonuclease involved in intron homing. The protein is Probable intron-encoded DNA endonuclease 2 (hegI2) of Mycosarcoma maydis (Corn smut fungus).